Consider the following 415-residue polypeptide: MHSTSLSLAQVDPEILAAINKESERQQFGLEMIASENYTSKAVMEAQGSILTNKYAEGYPGKRYYGGCVNVDTVESLAIERAKKLFGVQYANVQPHSGSQANMGVYLAACKAGETILGMDLSHGGHLTHGSPVNFSGMLFKAASYKLDPETGRLNYDTIRATAKEVQPKLIIAGYSAYPRTLDFAKFKEIADEVGAQLLVDMAHFAGLVATGHHPSPVPYADYITTTTHKTLRGPRGGMILTNSEEKAKTMNSRIFPGIQGGPLEHVIAGKAVAFGEALKPEFKDYSGKVVSNAKVLAEELLSAGFKLVTGGTDNHLILVDLSDREITGKLAENSLDEAGITVNKNTVPNEKRSPFVTSGVRIGTPALTTRGMGPAEMKQIAKWIGQVLNNAEDAGVKNRVHEEVKELCKQFPIY.

(6S)-5,6,7,8-tetrahydrofolate is bound by residues Leu-121 and 125-127 (GHL). The residue at position 230 (Lys-230) is an N6-(pyridoxal phosphate)lysine. (6S)-5,6,7,8-tetrahydrofolate-binding positions include Glu-246 and 354 to 356 (SPF).

The protein belongs to the SHMT family. As to quaternary structure, homodimer. Requires pyridoxal 5'-phosphate as cofactor.

It localises to the cytoplasm. The enzyme catalyses (6R)-5,10-methylene-5,6,7,8-tetrahydrofolate + glycine + H2O = (6S)-5,6,7,8-tetrahydrofolate + L-serine. It functions in the pathway one-carbon metabolism; tetrahydrofolate interconversion. It participates in amino-acid biosynthesis; glycine biosynthesis; glycine from L-serine: step 1/1. Its function is as follows. Catalyzes the reversible interconversion of serine and glycine with tetrahydrofolate (THF) serving as the one-carbon carrier. This reaction serves as the major source of one-carbon groups required for the biosynthesis of purines, thymidylate, methionine, and other important biomolecules. Also exhibits THF-independent aldolase activity toward beta-hydroxyamino acids, producing glycine and aldehydes, via a retro-aldol mechanism. The polypeptide is Serine hydroxymethyltransferase (Bdellovibrio bacteriovorus (strain ATCC 15356 / DSM 50701 / NCIMB 9529 / HD100)).